The primary structure comprises 221 residues: Translation initiation factor 6 (221 aa).

It belongs to the eIF-6 family.

Binds to the 50S ribosomal subunit and prevents its association with the 30S ribosomal subunit to form the 70S initiation complex. This chain is Translation initiation factor 6, found in Methanospirillum hungatei JF-1 (strain ATCC 27890 / DSM 864 / NBRC 100397 / JF-1).